A 497-amino-acid polypeptide reads, in one-letter code: MALPTLPSYWSSRKHMDLRQRQHQQEDQFRQQWEQNSRYFRTWDIHNSKQIEWSSKISYQRSMHAYHCEKMKEEKRKILELRRERLRELLLEEQDLLAAELDELRLSMGLREQRLREQHQDLKSAREEQRKLIAERLLYEHWKKNNPKLRELELDLHKKHVINSWATQKEEKKQQEATEKQENKRLENQYAAARREAEARMRVEEERRQLEGRLQAEALRQQMEELKQKEMEATKLKKEQENLLRQRWELERLEEERRQMAALRRKTELGRFLKHQYNAQLNRRTQEIQEELEVDGRILQALLEKEGELQQVELARREQARADAAWMKQVIEEQLQLEKAREAELQQLLREEAKEMWEKREAEWAREQVARDRLMSEVLTGRQQQILEKIEQNRRAQEETLKHREKLIRSLEEGKQLAQRAKEESEELKLARKQELEAQVAERQGQEWEAARQEEEEEEEARQAEEHSNALLQQEAKTMAEKGYQPKLHGHLRIAWD.

Coiled coils occupy residues 67–140, 166–271, and 327–479; these read HCEK…LLYE, ATQK…ELGR, and MKQV…AKTM. The segment at 72–457 is interaction with keratin proteins; that stretch reads KEEKRKILEL…WEAARQEEEE (386 aa). Residues 167-188 are disordered; it reads TQKEEKKQQEATEKQENKRLEN. Residues 168–188 show a composition bias toward basic and acidic residues; the sequence is QKEEKKQQEATEKQENKRLEN. Positions 258-424 are trichohyalin/plectin homology domain; that stretch reads RQMAALRRKT…KQLAQRAKEE (167 aa). The interval 441 to 497 is disordered; it reads AERQGQEWEAARQEEEEEEEARQAEEHSNALLQQEAKTMAEKGYQPKLHGHLRIAWD. A compositionally biased stretch (basic and acidic residues) spans 444–453; the sequence is QGQEWEAARQ. The segment covering 488–497 has biased composition (basic residues); it reads LHGHLRIAWD.

The protein belongs to the TCHP family. In terms of assembly, interacts specifically with keratin proteins including, KRT5, KRT6A, KRT8, KRT14, KRT16 and KRT18. Interacts with KCTD17. Ubiquitinated. Ubiquitination by the BCR(KCTD17) E3 ubiquitin ligase complex results in proteasomal degradation, and induces ciliogenesis. Expressed in all tissues examined, including brain, liver, small intestine, large intestine, lung and heart. Found concentrated in tubular structures within hepatocytes, and in the apical cortical region and desmosomes of the apical junctional domain in enterocytes of the small intestine. In the hair follicle, localized at the outer root sheath. Also expressed in blood vessels (at protein level).

The protein resides in the cytoplasm. It localises to the cytoskeleton. Its subcellular location is the cell membrane. It is found in the mitochondrion. The protein localises to the microtubule organizing center. The protein resides in the centrosome. Its function is as follows. Tumor suppressor which has the ability to inhibit cell growth and be pro-apoptotic during cell stress. May act as a 'capping' or 'branching' protein for keratin filaments in the cell periphery. May regulate K8/K18 filament and desmosome organization mainly at the apical or peripheral regions of simple epithelial cells. Is a negative regulator of ciliogenesis. In Mus musculus (Mouse), this protein is Trichoplein keratin filament-binding protein.